A 419-amino-acid chain; its full sequence is Phosphoglycerate kinase (419 aa).

Residues 21–23 (DFN), arginine 36, 60–63 (HLGD), arginine 137, and arginine 174 each bind substrate. ATP is bound by residues lysine 225, glycine 316, glutamate 347, and 376–379 (GGDS).

Belongs to the phosphoglycerate kinase family. In terms of assembly, monomer.

It is found in the cytoplasm. The enzyme catalyses (2R)-3-phosphoglycerate + ATP = (2R)-3-phospho-glyceroyl phosphate + ADP. The protein operates within carbohydrate degradation; glycolysis; pyruvate from D-glyceraldehyde 3-phosphate: step 2/5. This Treponema pallidum (strain Nichols) protein is Phosphoglycerate kinase (pgk).